A 122-amino-acid chain; its full sequence is Small ribosomal subunit protein uS13 (122 aa).

Residues 98–122 are disordered; the sequence is VRGQRTHTNARTRKGPAKAIAGKKK.

The protein belongs to the universal ribosomal protein uS13 family. As to quaternary structure, part of the 30S ribosomal subunit. Forms a loose heterodimer with protein S19. Forms two bridges to the 50S subunit in the 70S ribosome.

Located at the top of the head of the 30S subunit, it contacts several helices of the 16S rRNA. In the 70S ribosome it contacts the 23S rRNA (bridge B1a) and protein L5 of the 50S subunit (bridge B1b), connecting the 2 subunits; these bridges are implicated in subunit movement. Contacts the tRNAs in the A and P-sites. In Roseobacter denitrificans (strain ATCC 33942 / OCh 114) (Erythrobacter sp. (strain OCh 114)), this protein is Small ribosomal subunit protein uS13.